The primary structure comprises 387 residues: Succinate--CoA ligase [ADP-forming] subunit beta (387 aa).

Residues 9 to 244 (KHILSKFGVN…YDEEIKEEIE (236 aa)) enclose the ATP-grasp domain. ATP is bound by residues K46, 53 to 55 (GRG), E99, C102, and E107. 2 residues coordinate Mg(2+): N199 and D213. Substrate is bound by residues N264 and 321–323 (GIM).

Belongs to the succinate/malate CoA ligase beta subunit family. In terms of assembly, heterotetramer of two alpha and two beta subunits. The cofactor is Mg(2+).

The catalysed reaction is succinate + ATP + CoA = succinyl-CoA + ADP + phosphate. It catalyses the reaction GTP + succinate + CoA = succinyl-CoA + GDP + phosphate. Its pathway is carbohydrate metabolism; tricarboxylic acid cycle; succinate from succinyl-CoA (ligase route): step 1/1. Succinyl-CoA synthetase functions in the citric acid cycle (TCA), coupling the hydrolysis of succinyl-CoA to the synthesis of either ATP or GTP and thus represents the only step of substrate-level phosphorylation in the TCA. The beta subunit provides nucleotide specificity of the enzyme and binds the substrate succinate, while the binding sites for coenzyme A and phosphate are found in the alpha subunit. In Ehrlichia chaffeensis (strain ATCC CRL-10679 / Arkansas), this protein is Succinate--CoA ligase [ADP-forming] subunit beta.